A 511-amino-acid polypeptide reads, in one-letter code: Maturase K (511 aa).

Belongs to the intron maturase 2 family. MatK subfamily.

The protein localises to the plastid. It is found in the chloroplast. Usually encoded in the trnK tRNA gene intron. Probably assists in splicing its own and other chloroplast group II introns. The protein is Maturase K of Pistia stratiotes (Water lettuce).